The sequence spans 130 residues: Protein ApaG (130 aa).

Residues 3-127 (SAMTRSINIL…FSLDSPHAKR (125 aa)) enclose the ApaG domain.

This is Protein ApaG from Parvibaculum lavamentivorans (strain DS-1 / DSM 13023 / NCIMB 13966).